The chain runs to 493 residues: Endoglucanase 23 (493 aa).

The N-terminal stretch at 1–23 is a signal peptide; the sequence is MKASIYLVTVFILLLLLLPTAIP. The Nucleophile role is filled by aspartate 78. Asparagine 297 is a glycosylation site (N-linked (GlcNAc...) asparagine). Histidine 410 is a catalytic residue. N-linked (GlcNAc...) asparagine glycosylation is present at asparagine 465. Glutamate 470 is an active-site residue.

Belongs to the glycosyl hydrolase 9 (cellulase E) family.

Its subcellular location is the secreted. The enzyme catalyses Endohydrolysis of (1-&gt;4)-beta-D-glucosidic linkages in cellulose, lichenin and cereal beta-D-glucans.. This chain is Endoglucanase 23, found in Arabidopsis thaliana (Mouse-ear cress).